Consider the following 333-residue polypeptide: Extracellular globin (333 aa).

Positions 1–18 (MHSSIVLAIVLFVAIASA) are cleaved as a signal peptide. 2 Globin domains span residues 25 to 167 (CMKS…HHGR) and 174 to 318 (CMNS…KHAK). Residues Q82 and H114 each contribute to the heme b site. N216 carries N-linked (GlcNAc...) asparagine glycosylation. Positions 231 and 263 each coordinate heme b. Positions 314 to 333 (DKHAKAEKDHHEGEHKEEHH) are disordered.

This sequence belongs to the globin family. In terms of assembly, homooctamer.

Its subcellular location is the secreted. The protein localises to the extracellular space. The sequence is that of Extracellular globin from Pseudoterranova decipiens (Sealworm).